Reading from the N-terminus, the 31-residue chain is Cyclotide vpub-B (31 aa).

A cross-link (cyclopeptide (Gly-Asn)) is located at residues 1 to 31 (GIIPCGESCVFIPCITSVVGCSCKSKVCYKN). Cystine bridges form between Cys-5–Cys-21, Cys-9–Cys-23, and Cys-14–Cys-28.

The protein belongs to the cyclotide family. Bracelet subfamily. In terms of processing, this is a cyclic peptide.

Its function is as follows. Probably participates in a plant defense mechanism. This is Cyclotide vpub-B from Viola pubescens (Downy yellow violet).